Consider the following 1086-residue polypeptide: 1,2-beta-oligoglucan phosphorylase (1086 aa).

The Proton donor role is filled by Asp741.

It belongs to the glycosyl hydrolase 94 family. In terms of assembly, monomer.

The catalysed reaction is [(1-&gt;2)-beta-D-glucosyl](n) + phosphate = [(1-&gt;2)-beta-D-glucosyl](n-1) + alpha-D-glucose 1-phosphate. Functionally, catalyzes the reversible phosphorolysis of beta-(1-&gt;2)-D-glucans. The minimum length of the substrate for the phosphorolytic reaction is 3 D-glucose units. The sequence is that of 1,2-beta-oligoglucan phosphorylase from Listeria innocua serovar 6a (strain ATCC BAA-680 / CLIP 11262).